We begin with the raw amino-acid sequence, 182 residues long: Isopentenyl-diphosphate Delta-isomerase (182 aa).

Residues His-25 and His-32 each coordinate Mn(2+). The region spanning 30–164 (LLHLAFSSWL…PWAFSPWMVM (135 aa)) is the Nudix hydrolase domain. The active site involves Cys-67. A Mg(2+)-binding site is contributed by Cys-67. His-69 serves as a coordination point for Mn(2+). Glu-87 lines the Mg(2+) pocket. Mn(2+) is bound by residues Glu-114 and Glu-116. Glu-116 is an active-site residue.

The protein belongs to the IPP isomerase type 1 family. As to quaternary structure, homodimer. Mg(2+) is required as a cofactor. It depends on Mn(2+) as a cofactor.

The protein resides in the cytoplasm. It catalyses the reaction isopentenyl diphosphate = dimethylallyl diphosphate. The protein operates within isoprenoid biosynthesis; dimethylallyl diphosphate biosynthesis; dimethylallyl diphosphate from isopentenyl diphosphate: step 1/1. Its function is as follows. Catalyzes the 1,3-allylic rearrangement of the homoallylic substrate isopentenyl (IPP) to its highly electrophilic allylic isomer, dimethylallyl diphosphate (DMAPP). This is Isopentenyl-diphosphate Delta-isomerase from Escherichia coli O6:H1 (strain CFT073 / ATCC 700928 / UPEC).